Consider the following 430-residue polypeptide: 3-phosphoshikimate 1-carboxyvinyltransferase (430 aa).

Lys-20, Ser-21, and Arg-25 together coordinate 3-phosphoshikimate. Lys-20 provides a ligand contact to phosphoenolpyruvate. Residues Gly-92 and Arg-120 each contribute to the phosphoenolpyruvate site. 3-phosphoshikimate-binding residues include Ser-166, Gln-168, Asp-312, and Lys-339. A phosphoenolpyruvate-binding site is contributed by Gln-168. Asp-312 acts as the Proton acceptor in catalysis. Phosphoenolpyruvate is bound by residues Arg-343 and Arg-387.

It belongs to the EPSP synthase family. In terms of assembly, monomer.

The protein resides in the cytoplasm. The enzyme catalyses 3-phosphoshikimate + phosphoenolpyruvate = 5-O-(1-carboxyvinyl)-3-phosphoshikimate + phosphate. Its pathway is metabolic intermediate biosynthesis; chorismate biosynthesis; chorismate from D-erythrose 4-phosphate and phosphoenolpyruvate: step 6/7. Functionally, catalyzes the transfer of the enolpyruvyl moiety of phosphoenolpyruvate (PEP) to the 5-hydroxyl of shikimate-3-phosphate (S3P) to produce enolpyruvyl shikimate-3-phosphate and inorganic phosphate. In Lactococcus lactis subsp. lactis (strain IL1403) (Streptococcus lactis), this protein is 3-phosphoshikimate 1-carboxyvinyltransferase.